A 252-amino-acid chain; its full sequence is Hydroxyacylglutathione hydrolase (252 aa).

7 residues coordinate Zn(2+): histidine 52, histidine 54, aspartate 56, histidine 57, histidine 107, aspartate 128, and histidine 166.

This sequence belongs to the metallo-beta-lactamase superfamily. Glyoxalase II family. As to quaternary structure, monomer. It depends on Zn(2+) as a cofactor.

The enzyme catalyses an S-(2-hydroxyacyl)glutathione + H2O = a 2-hydroxy carboxylate + glutathione + H(+). Its pathway is secondary metabolite metabolism; methylglyoxal degradation; (R)-lactate from methylglyoxal: step 2/2. In terms of biological role, thiolesterase that catalyzes the hydrolysis of S-D-lactoyl-glutathione to form glutathione and D-lactic acid. The polypeptide is Hydroxyacylglutathione hydrolase (Neisseria meningitidis serogroup C / serotype 2a (strain ATCC 700532 / DSM 15464 / FAM18)).